The sequence spans 373 residues: Putative protein YfkA (373 aa).

A Radical SAM core domain is found at 26–256 (YGDMQLTNVE…DIRDENTWML (231 aa)). [4Fe-4S] cluster contacts are provided by Cys-42, Cys-46, and Cys-49.

Belongs to the radical SAM superfamily. [4Fe-4S] cluster is required as a cofactor.

In Bacillus subtilis (strain 168), this protein is Putative protein YfkA (yfkA).